We begin with the raw amino-acid sequence, 498 residues long: MSDVASQIIELRPILPFAYARSQQILLLQRENDASLQTICVAQTPPAALLEARRIAGCSLRIERVTDEEFERQLVISYQRDSEEARRMMEDIGNEMDFYTLVEELPDSDDLLDADDDAPIIRLINAMLTEAIKNKASDIHIETYERYLLIRFRVDGVLREILRPQRKLASLLVSRIKVMAKLDIAEKRVPQDGRMALRVGGRAIDVRVSTLPSNYGERVVLRLLDKNSVKLDLELLGMSERNRQLLDSLIHRPHGIILVTGPTGSGKSTTLYAALSRLNASERNIMTVEDPIEYELEGIGQTQVNTKVDMTFARGLRAILRQDPDVVLVGEIRDGETAQIAVQASLTGHLVLSTLHTNSALGALSRLQDMGVEPFLLSTSLLGVLAQRLVRTLCSDCSQPQPVDPVQAEQMGIAPGTLLHNPVGCPQCSFTGYRGRIGIHELVLINDDVRAAIHRSDGEMAIAQILGGSRTTIRQDGLNKVLAGLTTWEEVIRVTKEE.

261–268 contacts ATP; that stretch reads GPTGSGKS. Positions 394, 397, 425, and 428 each coordinate Zn(2+).

Belongs to the GSP E family. In terms of assembly, forms homooligomers; most probably hexamers. Interacts with OutL/GspL. Zn(2+) is required as a cofactor.

The protein resides in the cell inner membrane. It catalyses the reaction ATP + H2O + cellular proteinSide 1 = ADP + phosphate + cellular proteinSide 2.. Its function is as follows. ATPase component of the type II secretion system required for the energy-dependent secretion of extracellular factors such as proteases and toxins from the periplasm. Acts as a molecular motor to provide the energy that is required for assembly of the pseudopilus and the extrusion of substrates generated in the cytoplasm. This Pectobacterium carotovorum subsp. carotovorum (Erwinia carotovora subsp. carotovora) protein is Type II secretion system protein E (outE).